Here is a 396-residue protein sequence, read N- to C-terminus: Elongation factor Tu 2 (396 aa).

Residues 10–206 (KPHINVGTIG…VLDSYIPEPQ (197 aa)) form the tr-type G domain. Residues 19 to 26 (GHVDHGKT) are G1. 19 to 26 (GHVDHGKT) is a GTP binding site. Position 26 (T26) interacts with Mg(2+). The G2 stretch occupies residues 60–64 (GITIN). Residues 81 to 84 (DCPG) are G3. GTP contacts are provided by residues 81–85 (DCPGH) and 136–139 (NKAD). The G4 stretch occupies residues 136–139 (NKAD). Residues 174 to 176 (SAL) form a G5 region.

Belongs to the TRAFAC class translation factor GTPase superfamily. Classic translation factor GTPase family. EF-Tu/EF-1A subfamily. In terms of assembly, monomer.

It localises to the cytoplasm. The enzyme catalyses GTP + H2O = GDP + phosphate + H(+). Functionally, GTP hydrolase that promotes the GTP-dependent binding of aminoacyl-tRNA to the A-site of ribosomes during protein biosynthesis. This chain is Elongation factor Tu 2, found in Nitrosomonas eutropha (strain DSM 101675 / C91 / Nm57).